A 190-amino-acid polypeptide reads, in one-letter code: Putative transcription factor ovo-like protein 3 (190 aa).

Disordered stretches follow at residues 1–21 (MPRAFLVRSRRPQPPNWGHLP) and 35–65 (SLGGPPAQQSSSVRDPWTAQPTQGNLTSAPR). The segment covering 41–62 (AQQSSSVRDPWTAQPTQGNLTS) has biased composition (polar residues). 4 consecutive C2H2-type zinc fingers follow at residues 70-92 (LGCPLCPKAFPLQRMLTRHLKCH), 98-120 (HLCRCCGKGFHDAFDLKRHMRTH), 126-149 (FRCSACGKAFTQRCSLEAHLAKVH), and 165-187 (HVCEDCGFTSSRPDTYAQHRALH).

The protein belongs to the krueppel C2H2-type zinc-finger protein family.

The protein localises to the nucleus. In terms of biological role, may act as a transcription regulator. The sequence is that of Putative transcription factor ovo-like protein 3 (OVOL3) from Homo sapiens (Human).